Consider the following 67-residue polypeptide: Vespin (67 aa).

The first 21 residues, 1–21 (MHPIIWELSHMVDLQAAAQKL), serve as a signal peptide directing secretion.

In terms of tissue distribution, expressed by the venom gland.

Its subcellular location is the secreted. In terms of biological role, shows contractile activity on isolated ileum smooth muscle. This Vespa magnifica (Hornet) protein is Vespin.